We begin with the raw amino-acid sequence, 270 residues long: Allergen Asp f 7 (270 aa).

The N-terminal stretch at 1-21 (MAPIFKSLALVSALFAAISSA) is a signal peptide. 2 disordered regions span residues 53–97 (YPTP…QPTQ) and 113–167 (ADSA…GPCS). Residues 63–81 (VVESTPTPTPSAAPEQAEP) show a composition bias toward low complexity. Residues 83–97 (ETSTQPETTKSQPTQ) show a composition bias toward polar residues. Residues 127 to 149 (PATTAAPSTSTTTQAAPSAPPAA) are compositionally biased toward low complexity. Polar residues predominate over residues 150–162 (NSGSTEKAASSGY).

This chain is Allergen Asp f 7, found in Aspergillus fumigatus (strain ATCC MYA-4609 / CBS 101355 / FGSC A1100 / Af293) (Neosartorya fumigata).